Reading from the N-terminus, the 555-residue chain is CTP synthase (555 aa).

The segment at 1 to 271 (MVKRGKKTKY…DDKLAELFNI (271 aa)) is amidoligase domain. S19 is a CTP binding site. Residue S19 participates in UTP binding. Residues 20-25 (SLGKGL) and D77 contribute to the ATP site. Mg(2+)-binding residues include D77 and E145. CTP-binding positions include 152–154 (DIE), 192–197 (KTKPTQ), and K228. Residues 192-197 (KTKPTQ) and K228 contribute to the UTP site. The Glutamine amidotransferase type-1 domain occupies 297–538 (RVGVVGKYVE…VHAAREQRDQ (242 aa)). L-glutamine is bound at residue G358. C385 (nucleophile; for glutamine hydrolysis) is an active-site residue. L-glutamine contacts are provided by residues 386–389 (LGLQ), E409, and R466. Residues H511 and E513 contribute to the active site.

It belongs to the CTP synthase family. As to quaternary structure, homotetramer.

The catalysed reaction is UTP + L-glutamine + ATP + H2O = CTP + L-glutamate + ADP + phosphate + 2 H(+). It catalyses the reaction L-glutamine + H2O = L-glutamate + NH4(+). The enzyme catalyses UTP + NH4(+) + ATP = CTP + ADP + phosphate + 2 H(+). It functions in the pathway pyrimidine metabolism; CTP biosynthesis via de novo pathway; CTP from UDP: step 2/2. Its activity is regulated as follows. Allosterically activated by GTP, when glutamine is the substrate; GTP has no effect on the reaction when ammonia is the substrate. The allosteric effector GTP functions by stabilizing the protein conformation that binds the tetrahedral intermediate(s) formed during glutamine hydrolysis. Inhibited by the product CTP, via allosteric rather than competitive inhibition. Its function is as follows. Catalyzes the ATP-dependent amination of UTP to CTP with either L-glutamine or ammonia as the source of nitrogen. Regulates intracellular CTP levels through interactions with the four ribonucleotide triphosphates. This Anaeromyxobacter sp. (strain Fw109-5) protein is CTP synthase.